Here is a 76-residue protein sequence, read N- to C-terminus: Antimicrobial peptide Smp24 (76 aa).

A signal peptide spans 1-22; it reads MQYKTFLVIFMAYLLVTHEAEA. A propeptide spanning residues 47–76 is cleaved from the precursor; sequence SKRKRDVEDFFDPYQRDLDLELERLLSQLQ.

This sequence belongs to the non-disulfide-bridged peptide (NDBP) superfamily. Medium-length antimicrobial peptide (group 3) family. As to expression, expressed by the venom gland.

The protein resides in the secreted. It localises to the target cell membrane. In terms of biological role, peptide that shows antimicrobial activity, moderate cytolysis on eukaryote cells and interference with DNA synthesis. Has potent activity against Gram-positive bacteria and moderate activity against Gram-negative bacteria, as well as moderate activity against fungi. Acts by inducing bacterial membrane disruption. Uses multiple modes of action depending on the membrane lipid composition. Uses a toroidal pore mechanism against the prokaryotic like membrane and forms hexagonal phase non-lamellar structures in eukaryotic-like membrane. Shows activity against B.subtilis (MIC=4 ug/ml), S.epidermidis (MIC=8 ug/ml), S.aureus (MIC=8 ug/ml), E.coli (MIC=64 ug/ml), K.pneumoniae (MIC=128 ug/ml), P.aeruginosa (MIC=256 ug/ml), and C.albicans (MIC=32 ug/ml). Shows moderate hemolysis activity. The chain is Antimicrobial peptide Smp24 from Scorpio palmatus (Israeli golden scorpion).